A 598-amino-acid chain; its full sequence is NADH-ubiquinone oxidoreductase chain 5 (598 aa).

Transmembrane regions (helical) follow at residues M1–F21, F28–M48, C81–M101, G115–I135, G171–F191, G193–A213, T233–I253, I265–L285, V293–G312, M323–Q343, S362–F382, W399–F421, V454–L474, L480–L500, I509–I529, and L576–I596.

Belongs to the complex I subunit 5 family.

It is found in the mitochondrion inner membrane. It carries out the reaction a ubiquinone + NADH + 5 H(+)(in) = a ubiquinol + NAD(+) + 4 H(+)(out). Functionally, core subunit of the mitochondrial membrane respiratory chain NADH dehydrogenase (Complex I) that is believed to belong to the minimal assembly required for catalysis. Complex I functions in the transfer of electrons from NADH to the respiratory chain. The immediate electron acceptor for the enzyme is believed to be ubiquinone. The polypeptide is NADH-ubiquinone oxidoreductase chain 5 (ND5) (Branchiostoma lanceolatum (Common lancelet)).